The sequence spans 274 residues: Orotidine 5'-phosphate decarboxylase (274 aa).

Lys-95 functions as the Proton donor in the catalytic mechanism.

Belongs to the OMP decarboxylase family. Type 2 subfamily.

The catalysed reaction is orotidine 5'-phosphate + H(+) = UMP + CO2. It participates in pyrimidine metabolism; UMP biosynthesis via de novo pathway; UMP from orotate: step 2/2. This Mycolicibacterium paratuberculosis (strain ATCC BAA-968 / K-10) (Mycobacterium paratuberculosis) protein is Orotidine 5'-phosphate decarboxylase.